Reading from the N-terminus, the 363-residue chain is Pulmonary surfactant-associated protein B (363 aa).

The first 16 residues, 1 to 16 (LLWLLLLPTLCGLGAA), serve as a signal peptide directing secretion. Residues 17–180 (DWSAPSLACA…PHTQDLSEQQ (164 aa)) constitute a propeptide that is removed on maturation. One can recognise a Saposin A-type domain in the interval 18–58 (WSAPSLACARGPAFWCQSLEQALQCRALGHCLQEVWGNARA). Saposin B-type domains lie at 58–140 (ADDL…KPGL), 184–261 (PLPY…SHED), and 277–352 (QESK…RTTF). 9 disulfide bridges follow: cysteine 62-cysteine 136, cysteine 65-cysteine 130, cysteine 93-cysteine 105, cysteine 188-cysteine 257, cysteine 191-cysteine 251, cysteine 215-cysteine 226, cysteine 281-cysteine 348, cysteine 284-cysteine 342, and cysteine 307-cysteine 317. Residues 260-363 (EDSAGPALAS…PLQCIHIPHF (104 aa)) constitute a propeptide that is removed on maturation. N-linked (GlcNAc...) asparagine glycosylation occurs at asparagine 293.

Homodimer; disulfide-linked.

The protein localises to the secreted. It localises to the extracellular space. The protein resides in the surface film. Pulmonary surfactant-associated proteins promote alveolar stability by lowering the surface tension at the air-liquid interface in the peripheral air spaces. SP-B increases the collapse pressure of palmitic acid to nearly 70 millinewtons per meter. In Canis lupus familiaris (Dog), this protein is Pulmonary surfactant-associated protein B (SFTPB).